Reading from the N-terminus, the 331-residue chain is Phenylalanine--tRNA ligase alpha subunit (331 aa).

Residue E258 coordinates Mg(2+).

The protein belongs to the class-II aminoacyl-tRNA synthetase family. Phe-tRNA synthetase alpha subunit type 1 subfamily. Tetramer of two alpha and two beta subunits. Requires Mg(2+) as cofactor.

The protein localises to the cytoplasm. The enzyme catalyses tRNA(Phe) + L-phenylalanine + ATP = L-phenylalanyl-tRNA(Phe) + AMP + diphosphate + H(+). The sequence is that of Phenylalanine--tRNA ligase alpha subunit (pheS) from Synechocystis sp. (strain ATCC 27184 / PCC 6803 / Kazusa).